Here is a 635-residue protein sequence, read N- to C-terminus: Threonine--tRNA ligase (635 aa).

The 61-residue stretch at 1–61 (MITVRLPDGS…EQDSDLSIIT (61 aa)) folds into the TGS domain. The catalytic stretch occupies residues 242-533 (DHRKLGRALD…LIENHAGALP (292 aa)). The Zn(2+) site is built by cysteine 333, histidine 384, and histidine 510.

The protein belongs to the class-II aminoacyl-tRNA synthetase family. Homodimer. Requires Zn(2+) as cofactor.

It localises to the cytoplasm. The enzyme catalyses tRNA(Thr) + L-threonine + ATP = L-threonyl-tRNA(Thr) + AMP + diphosphate + H(+). Its function is as follows. Catalyzes the attachment of threonine to tRNA(Thr) in a two-step reaction: L-threonine is first activated by ATP to form Thr-AMP and then transferred to the acceptor end of tRNA(Thr). Also edits incorrectly charged L-seryl-tRNA(Thr). The polypeptide is Threonine--tRNA ligase (Herminiimonas arsenicoxydans).